The primary structure comprises 520 residues: MPGSLPLNAEACWPKDVGIVALEIYFPSQYVDQAELEKYDGVDAGKYTIGLGQARMGFCTDREDINSLCLTVVQKLMERHSLSYDCIGRLEVGTETIIDKSKSVKSNLMQLFEESGNTDIEGIDTTNACYGGTAAVFNAVNWVESSSWDGRYALVVAGDIAIYATGNARPTGGVGAVALLIGPNAPLIFDRGLRGTHMQHAYDFYKPDMLSEYPVVDGKLSIQCYLSALDRCYSVYRKKIRAQWQKEGKDKDFTLNDFGFMIFHSPYCKLVQKSLARMFLNDFLNDQNRDKNSIYSGLEAFGDVKLEDTYFDRDVEKAFMKASSELFNQKTKASLLVSNQNGNMYTSSVYGSLASVLAQYSPQQLAGKRVGVFSYGSGLAATLYSLKVTQDATPGSALDKITASLCDLKSRLDSRTCVAPDVFAENMKLREDTHHLANYIPQCSIDSLFEGTWYLVRVDEKHRRTYARRPFTNDHSLDEGMGLVHSNTATEHIPSPAKKVPRLPATSAESESAVISNGEH.

Serine 4 is modified (phosphoserine). (3S)-3-hydroxy-3-methylglutaryl-CoA-binding residues include aspartate 43 and alanine 44. 44–46 (AGK) contacts CoA. Lysine 46 carries the post-translational modification N6-acetyllysine. Glutamate 95 serves as the catalytic Proton donor/acceptor. Residues cysteine 129, asparagine 167, threonine 171, serine 221, and histidine 264 each contribute to the (3S)-3-hydroxy-3-methylglutaryl-CoA site. Cysteine 129 functions as the Acyl-thioester intermediate in the catalytic mechanism. Asparagine 167 provides a ligand contact to CoA. Serine 221 lines the CoA pocket. Residue histidine 264 is the Proton donor/acceptor of the active site. CoA is bound by residues lysine 269 and lysine 273. 3 residues coordinate (3S)-3-hydroxy-3-methylglutaryl-CoA: lysine 273, asparagine 343, and serine 377. Lysine 273 bears the N6-acetyllysine mark. Residues 488-520 (TATEHIPSPAKKVPRLPATSAESESAVISNGEH) are disordered. Phosphoserine is present on residues serine 495 and serine 516. The span at 507-520 (SAESESAVISNGEH) shows a compositional bias: polar residues.

It belongs to the thiolase-like superfamily. HMG-CoA synthase family. In terms of assembly, homodimer.

Its subcellular location is the cytoplasm. The catalysed reaction is acetoacetyl-CoA + acetyl-CoA + H2O = (3S)-3-hydroxy-3-methylglutaryl-CoA + CoA + H(+). It functions in the pathway metabolic intermediate biosynthesis; (R)-mevalonate biosynthesis; (R)-mevalonate from acetyl-CoA: step 2/3. Catalyzes the condensation of acetyl-CoA with acetoacetyl-CoA to form HMG-CoA, which is converted by HMG-CoA reductase (HMGCR) into mevalonate, a precursor for cholesterol synthesis. The sequence is that of Hydroxymethylglutaryl-CoA synthase, cytoplasmic from Mus musculus (Mouse).